Reading from the N-terminus, the 102-residue chain is Outer membrane protein assembly factor BamE (102 aa).

A signal peptide spans 1 to 20 (MNNYIKALLIIICFSSCSIS).

Belongs to the BamE family. As to quaternary structure, part of the Bam complex.

The protein localises to the cell outer membrane. In terms of biological role, part of the outer membrane protein assembly complex, which is involved in assembly and insertion of beta-barrel proteins into the outer membrane. This Buchnera aphidicola subsp. Acyrthosiphon pisum (strain APS) (Acyrthosiphon pisum symbiotic bacterium) protein is Outer membrane protein assembly factor BamE.